The primary structure comprises 231 residues: Dephospho-CoA kinase domain-containing protein (231 aa).

One can recognise a DPCK domain in the interval 3–207 (LVGLTGGIAS…HSLEYLPLRL (205 aa)). 8-15 (GGIASGKS) contributes to the ATP binding site.

The protein belongs to the CoaE family.

The polypeptide is Dephospho-CoA kinase domain-containing protein (DCAKD) (Bos taurus (Bovine)).